A 187-amino-acid polypeptide reads, in one-letter code: uncharacterized protein (187 aa).

Residues alanine 3–tyrosine 23 traverse the membrane as a helical segment.

The protein localises to the membrane. This is an uncharacterized protein from Methanocaldococcus jannaschii (strain ATCC 43067 / DSM 2661 / JAL-1 / JCM 10045 / NBRC 100440) (Methanococcus jannaschii).